Consider the following 935-residue polypeptide: Intimin (935 aa).

Positions 1–41 (MITHGFYARTRHKHKLKKTFIMLSAGLGLFFYVNQNSFANG) are cleaved as a signal peptide. The tract at residues 40–153 (NGENYFKLSS…KMTKMSPDAT (114 aa)) is peptidoglycan-binding. Positions 40–153 (NGENYFKLSS…KMTKMSPDAT (114 aa)) are sufficient for homodimerization. A required for periplasmic localization region spans residues 40–212 (NGENYFKLSS…LQAWLQHYGT (173 aa)). The region spanning 63 to 112 (LFYTLKTGETVSSISKSQGISLSVIWSLNKHLYSSESEMLKAAPGQQIIL) is the LysM domain. Residues 210-411 (YGTAEVNLQS…LYSMQFRYQF (202 aa)) are inverse autotransporter. The segment at 402-411 (LYSMQFRYQF) is signature sequence for beta-barrel assembly machinery (BAM), which recognizes the unfolded beta-barrel in the periplasm. Big-1 domains lie at 560–653 (VTDF…VIFV) and 660–754 (ITEI…VTFF). One can recognise a BIG2 domain in the interval 790–834 (GGNGTYSWHSENTNIATVDESGKVTLKGKGTAVINVTSGDKQTVS). Cysteines 859 and 933 form a disulfide.

The protein belongs to the intimin/invasin family. In terms of assembly, homodimer. Interacts with Tir.

It localises to the cell outer membrane. Its function is as follows. An inverse autotransporter. Adhesin, which mediates attachment to the human intestine epithelial cells. Necessary for the production of attaching and effacing lesions on infected human tissue culture cells. Anchored to the outer membrane by binding to peptidoglycan (PGN) via its periplasmic domain, thus helping in receptor interactions during host invasion. PGN-binding may also aid in resisting mechanical and chemical stress during transit of the bacterium through the gastrointestinal tract of the host. The protein is Intimin (eae) of Escherichia coli O111:H-.